The primary structure comprises 135 residues: Fatty acid-binding protein 5 (135 aa).

At alanine 2 the chain carries N-acetylalanine. Phosphoserine is present on serine 3. Positions 24–34 (KELGVGLALRK) match the Nuclear localization signal motif. The 1-eicosanoylglycerol site is built by cysteine 43, threonine 56, and arginine 109. Residues cysteine 120 and cysteine 127 are joined by a disulfide bond. 129 to 131 (RVY) contributes to the 1-eicosanoylglycerol binding site. 129–131 (RVY) is a (9Z,12Z)-octadecadienoate binding site. Tyrosine 131 serves as a coordination point for hexadecanoate. Tyrosine 131 serves as a coordination point for N-eicosanoyl ethanolamine. Tyrosine 131 is modified (phosphotyrosine).

It belongs to the calycin superfamily. Fatty-acid binding protein (FABP) family. In terms of assembly, monomer. As to expression, widely expressed.

Its subcellular location is the cytoplasm. The protein localises to the nucleus. It is found in the synapse. The protein resides in the postsynaptic density. It localises to the secreted. The catalysed reaction is hexadecanoate(out) = hexadecanoate(in). The enzyme catalyses (9Z,12Z)-octadecadienoate(out) = (9Z,12Z)-octadecadienoate(in). It catalyses the reaction (9Z)-octadecenoate(out) = (9Z)-octadecenoate(in). Its function is as follows. Intracellular carrier for long-chain fatty acids and related active lipids, such as endocannabinoids, that regulate the metabolism and actions of the ligands they bind. In addition to the cytosolic transport, selectively delivers specific fatty acids from the cytosol to the nucleus, wherein they activate nuclear receptors. Delivers retinoic acid to the nuclear receptor peroxisome proliferator-activated receptor delta; which promotes proliferation and survival. May also serve as a synaptic carrier of endocannabinoid at central synapses and thus controls retrograde endocannabinoid signaling. Modulates inflammation by regulating PTGES induction via NF-kappa-B activation, and prostaglandin E2 (PGE2) biosynthesis during inflammation. May be involved in keratinocyte differentiation. This is Fatty acid-binding protein 5 from Mus musculus (Mouse).